The primary structure comprises 317 residues: tRNA dimethylallyltransferase (317 aa).

14–21 (GPTAVGKT) contributes to the ATP binding site. Residue 16–21 (TAVGKT) coordinates substrate. Residues 39–42 (DSMQ) are interaction with substrate tRNA.

It belongs to the IPP transferase family. As to quaternary structure, monomer. Mg(2+) serves as cofactor.

The enzyme catalyses adenosine(37) in tRNA + dimethylallyl diphosphate = N(6)-dimethylallyladenosine(37) in tRNA + diphosphate. Catalyzes the transfer of a dimethylallyl group onto the adenine at position 37 in tRNAs that read codons beginning with uridine, leading to the formation of N6-(dimethylallyl)adenosine (i(6)A). The protein is tRNA dimethylallyltransferase of Bacillus cereus (strain B4264).